Reading from the N-terminus, the 241-residue chain is Large ribosomal subunit protein uL3 (241 aa).

2 disordered regions span residues 139–164 (VSHRSIGSTGGRQDPGKTFKNKKMPG) and 215–241 (DAPKPGKFRLANGGEEAAAPAAEQEGV). The residue at position 151 (Gln-151) is an N5-methylglutamine. The segment covering 225–241 (ANGGEEAAAPAAEQEGV) has biased composition (low complexity).

It belongs to the universal ribosomal protein uL3 family. In terms of assembly, part of the 50S ribosomal subunit. Forms a cluster with proteins L14 and L19. Methylated by PrmB.

Functionally, one of the primary rRNA binding proteins, it binds directly near the 3'-end of the 23S rRNA, where it nucleates assembly of the 50S subunit. The protein is Large ribosomal subunit protein uL3 of Rhodopseudomonas palustris (strain HaA2).